The following is a 273-amino-acid chain: Formamidopyrimidine-DNA glycosylase (273 aa).

Pro2 acts as the Schiff-base intermediate with DNA in catalysis. The active-site Proton donor is the Glu3. The active-site Proton donor; for beta-elimination activity is Lys58. The DNA site is built by His91 and Arg110. The segment at 238–272 adopts an FPG-type zinc-finger fold; sequence QVYGKTGQPCPRCASMIVKIKLGGRGTHLCPHCQK. Arg262 functions as the Proton donor; for delta-elimination activity in the catalytic mechanism.

The protein belongs to the FPG family. In terms of assembly, monomer. The cofactor is Zn(2+).

It catalyses the reaction Hydrolysis of DNA containing ring-opened 7-methylguanine residues, releasing 2,6-diamino-4-hydroxy-5-(N-methyl)formamidopyrimidine.. It carries out the reaction 2'-deoxyribonucleotide-(2'-deoxyribose 5'-phosphate)-2'-deoxyribonucleotide-DNA = a 3'-end 2'-deoxyribonucleotide-(2,3-dehydro-2,3-deoxyribose 5'-phosphate)-DNA + a 5'-end 5'-phospho-2'-deoxyribonucleoside-DNA + H(+). Functionally, involved in base excision repair of DNA damaged by oxidation or by mutagenic agents. Acts as a DNA glycosylase that recognizes and removes damaged bases. Has a preference for oxidized purines, such as 7,8-dihydro-8-oxoguanine (8-oxoG). Has AP (apurinic/apyrimidinic) lyase activity and introduces nicks in the DNA strand. Cleaves the DNA backbone by beta-delta elimination to generate a single-strand break at the site of the removed base with both 3'- and 5'-phosphates. The polypeptide is Formamidopyrimidine-DNA glycosylase (Streptococcus thermophilus (strain CNRZ 1066)).